The chain runs to 130 residues: MAYAIIETGGKQVRVEPGRFYDIELLSVEPDEKVTIDSVLLVQNDGEVTIGQPLVAGATVQGTVLRHLRGRKVLVYKMKPKKKTRKKRGHRQEITRLLIDSITLNGTVLTAPTATEETADATPDTETAAE.

Positions 110–130 (TAPTATEETADATPDTETAAE) are disordered.

The protein belongs to the bacterial ribosomal protein bL21 family. Part of the 50S ribosomal subunit. Contacts protein L20.

This protein binds to 23S rRNA in the presence of protein L20. In Nostoc sp. (strain PCC 7120 / SAG 25.82 / UTEX 2576), this protein is Large ribosomal subunit protein bL21.